A 473-amino-acid polypeptide reads, in one-letter code: Endoglucanase B (473 aa).

The N-terminal stretch at 1–17 is a signal peptide; the sequence is MKFLNTFSLLSLAIIGS. Residues 18-367 form a catalytic region; it reads KAMKNISSKE…GLIKGLGNSI (350 aa). Residue Glu-173 is the Proton donor of the active site. The active-site Nucleophile is the Glu-295. The segment at 365–387 is linker; sequence NSIKTRTTIRRTTTTTTSQSQPT. CBM10 domains are found at residues 391-427 and 436-473; these read SCFS…CGIK and ICWS…CGIY.

Belongs to the glycosyl hydrolase 5 (cellulase A) family.

It carries out the reaction Endohydrolysis of (1-&gt;4)-beta-D-glucosidic linkages in cellulose, lichenin and cereal beta-D-glucans.. Rate of hydrolysis of cellulo-oligosaccharides increased with increasing chain length from cellotriose to cellopentaose. In Neocallimastix patriciarum (Rumen fungus), this protein is Endoglucanase B (CELB).